Consider the following 83-residue polypeptide: U5-theraphotoxin-Hs1a 5 (83 aa).

The first 21 residues, 1-21 (MKTSMFLTLTGLVLLFVVCYA), serve as a signal peptide directing secretion. The propeptide occupies 22–49 (SESEEKEFPKELPSSIFAADSDFKVEER). Intrachain disulfides connect Cys-51-Cys-63, Cys-56-Cys-68, and Cys-62-Cys-75.

This sequence belongs to the neurotoxin 10 (Hwtx-1) family. 51 (Hntx-8) subfamily. Hntx-8 sub-subfamily. In terms of tissue distribution, expressed by the venom gland.

The protein localises to the secreted. Functionally, agglutinates erythrocytes. The chain is U5-theraphotoxin-Hs1a 5 from Cyriopagopus schmidti (Chinese bird spider).